A 362-amino-acid chain; its full sequence is Protein-glutamate methylesterase/protein-glutamine glutaminase 5 (362 aa).

The Response regulatory domain occupies 13 to 130; sequence RVLVVDDSAL…RRFLEESRVR (118 aa). At Asp-64 the chain carries 4-aspartylphosphate. One can recognise a CheB-type methylesterase domain in the interval 172–362; the sequence is LQTTERVVVV…IPPELLRLCR (191 aa). Active-site residues include Ser-184, His-210, and Asp-306.

It belongs to the CheB family. In terms of processing, phosphorylated by CheA. Phosphorylation of the N-terminal regulatory domain activates the methylesterase activity.

It localises to the cytoplasm. The enzyme catalyses [protein]-L-glutamate 5-O-methyl ester + H2O = L-glutamyl-[protein] + methanol + H(+). The catalysed reaction is L-glutaminyl-[protein] + H2O = L-glutamyl-[protein] + NH4(+). Involved in chemotaxis. Part of a chemotaxis signal transduction system that modulates chemotaxis in response to various stimuli. Catalyzes the demethylation of specific methylglutamate residues introduced into the chemoreceptors (methyl-accepting chemotaxis proteins or MCP) by CheR. Also mediates the irreversible deamidation of specific glutamine residues to glutamic acid. The sequence is that of Protein-glutamate methylesterase/protein-glutamine glutaminase 5 from Anaeromyxobacter dehalogenans (strain 2CP-C).